The following is a 461-amino-acid chain: Kynurenine 3-monooxygenase (461 aa).

FAD is bound by residues 17–18, 37–39, and A56; these read LA and ERR. The L-kynurenine site is built by R84 and Y98. FAD contacts are provided by residues R111, L135, D311, and 324–325; that span reads MN. L-kynurenine is bound by residues N369 and Y404.

Belongs to the aromatic-ring hydroxylase family. KMO subfamily. The cofactor is FAD.

It carries out the reaction L-kynurenine + NADPH + O2 + H(+) = 3-hydroxy-L-kynurenine + NADP(+) + H2O. It functions in the pathway cofactor biosynthesis; NAD(+) biosynthesis; quinolinate from L-kynurenine: step 1/3. It participates in siderophore biosynthesis; quinolobactin biosynthesis. Functionally, catalyzes the hydroxylation of L-kynurenine (L-Kyn) to form 3-hydroxy-L-kynurenine (L-3OHKyn). Probably required for the synthesis of quinolinic acid and the siderophore quinolobactin. This chain is Kynurenine 3-monooxygenase, found in Pseudomonas fluorescens.